A 256-amino-acid polypeptide reads, in one-letter code: uncharacterized protein (256 aa).

The protein belongs to the metallo-beta-lactamase superfamily.

This is an uncharacterized protein from Methanocaldococcus jannaschii (strain ATCC 43067 / DSM 2661 / JAL-1 / JCM 10045 / NBRC 100440) (Methanococcus jannaschii).